An 86-amino-acid chain; its full sequence is DNA-directed RNA polymerase subunit omega (86 aa).

Belongs to the RNA polymerase subunit omega family. The RNAP catalytic core consists of 2 alpha, 1 beta, 1 beta' and 1 omega subunit. When a sigma factor is associated with the core the holoenzyme is formed, which can initiate transcription.

It catalyses the reaction RNA(n) + a ribonucleoside 5'-triphosphate = RNA(n+1) + diphosphate. Functionally, promotes RNA polymerase assembly. Latches the N- and C-terminal regions of the beta' subunit thereby facilitating its interaction with the beta and alpha subunits. The protein is DNA-directed RNA polymerase subunit omega of Psychrobacter arcticus (strain DSM 17307 / VKM B-2377 / 273-4).